Here is a 423-residue protein sequence, read N- to C-terminus: Dihydroorotase (423 aa).

Zn(2+)-binding residues include histidine 60 and histidine 62. Residues 62–64 and asparagine 94 contribute to the substrate site; that span reads HFR. Zn(2+) contacts are provided by aspartate 152, histidine 179, histidine 232, and aspartate 305. Aspartate 305 is a catalytic residue. Substrate-binding positions include histidine 309 and 323–324; that span reads PG.

Belongs to the metallo-dependent hydrolases superfamily. DHOase family. Class I DHOase subfamily. Zn(2+) serves as cofactor.

The catalysed reaction is (S)-dihydroorotate + H2O = N-carbamoyl-L-aspartate + H(+). It participates in pyrimidine metabolism; UMP biosynthesis via de novo pathway; (S)-dihydroorotate from bicarbonate: step 3/3. Catalyzes the reversible cyclization of carbamoyl aspartate to dihydroorotate. The polypeptide is Dihydroorotase (Sulfurihydrogenibium sp. (strain YO3AOP1)).